A 582-amino-acid polypeptide reads, in one-letter code: Probable DNA ligase (582 aa).

Glu243 provides a ligand contact to ATP. Lys245 (N6-AMP-lysine intermediate) is an active-site residue. ATP contacts are provided by Arg250, Arg265, Glu295, Phe335, Arg410, and Lys416.

Belongs to the ATP-dependent DNA ligase family. Requires Mg(2+) as cofactor.

The catalysed reaction is ATP + (deoxyribonucleotide)n-3'-hydroxyl + 5'-phospho-(deoxyribonucleotide)m = (deoxyribonucleotide)n+m + AMP + diphosphate.. Its function is as follows. DNA ligase that seals nicks in double-stranded DNA during DNA replication, DNA recombination and DNA repair. The sequence is that of Probable DNA ligase from Dictyoglomus thermophilum (strain ATCC 35947 / DSM 3960 / H-6-12).